A 45-amino-acid polypeptide reads, in one-letter code: Large ribosomal subunit protein bL34 (45 aa).

The protein belongs to the bacterial ribosomal protein bL34 family.

The sequence is that of Large ribosomal subunit protein bL34 from Salinispora tropica (strain ATCC BAA-916 / DSM 44818 / JCM 13857 / NBRC 105044 / CNB-440).